The sequence spans 203 residues: dITP/XTP pyrophosphatase (203 aa).

8 to 13 contacts substrate; sequence TANKGK. Residues E41 and D70 each contribute to the Mg(2+) site. D70 (proton acceptor) is an active-site residue. Substrate contacts are provided by residues S71, 153 to 156, K176, and 181 to 182; these read FGYD and HR.

This sequence belongs to the HAM1 NTPase family. Homodimer. Requires Mg(2+) as cofactor.

The catalysed reaction is XTP + H2O = XMP + diphosphate + H(+). It carries out the reaction dITP + H2O = dIMP + diphosphate + H(+). It catalyses the reaction ITP + H2O = IMP + diphosphate + H(+). Its function is as follows. Pyrophosphatase that catalyzes the hydrolysis of nucleoside triphosphates to their monophosphate derivatives, with a high preference for the non-canonical purine nucleotides XTP (xanthosine triphosphate), dITP (deoxyinosine triphosphate) and ITP. Seems to function as a house-cleaning enzyme that removes non-canonical purine nucleotides from the nucleotide pool, thus preventing their incorporation into DNA/RNA and avoiding chromosomal lesions. In Listeria innocua serovar 6a (strain ATCC BAA-680 / CLIP 11262), this protein is dITP/XTP pyrophosphatase.